The chain runs to 311 residues: tRNA dimethylallyltransferase (311 aa).

Position 9–16 (9–16 (GPTAVGKT)) interacts with ATP. 11–16 (TAVGKT) is a substrate binding site. An interaction with substrate tRNA region spans residues 34-37 (DSMQ).

The protein belongs to the IPP transferase family. Monomer. It depends on Mg(2+) as a cofactor.

The catalysed reaction is adenosine(37) in tRNA + dimethylallyl diphosphate = N(6)-dimethylallyladenosine(37) in tRNA + diphosphate. Catalyzes the transfer of a dimethylallyl group onto the adenine at position 37 in tRNAs that read codons beginning with uridine, leading to the formation of N6-(dimethylallyl)adenosine (i(6)A). In Clostridium botulinum (strain Okra / Type B1), this protein is tRNA dimethylallyltransferase.